The sequence spans 143 residues: UPF0201 protein Tneu_0685 (143 aa).

This sequence belongs to the UPF0201 family.

This Pyrobaculum neutrophilum (strain DSM 2338 / JCM 9278 / NBRC 100436 / V24Sta) (Thermoproteus neutrophilus) protein is UPF0201 protein Tneu_0685.